The chain runs to 198 residues: Sulfite reductase, dissimilatory-type subunit alpha (198 aa).

Residues Cys45, Cys64, Cys67, and Cys70 each coordinate [4Fe-4S] cluster. The region spanning Gly55–Glu83 is the 4Fe-4S ferredoxin-type domain.

In terms of assembly, heterohexamer of two alpha, two beta and two gamma subunits.

Its function is as follows. Part of the complex that catalyzes the reduction of sulfite to sulfide. The alpha and beta subunits may have arisen by gene duplication. They both bind 2 iron-sulfur clusters, but the alpha subunit seems to be catalytically inactive, due to substitutions along the putative substrate access channel, and because it binds sirohydrochlorin (the dematallated form of siroheme) instead of siroheme. The polypeptide is Sulfite reductase, dissimilatory-type subunit alpha (dsrA) (Megalodesulfovibrio gigas (strain ATCC 19364 / DSM 1382 / NCIMB 9332 / VKM B-1759) (Desulfovibrio gigas)).